The primary structure comprises 1026 residues: Adenylate-forming reductase 06235 (1026 aa).

An adenylation (A) domain region spans residues 37–422 (FEFHAKANPD…LGRIDNQVKI (386 aa)). Residues 332-333 (VT) and 412-415 (HLGR) each bind AMP. Positions 556 to 638 (SLVSTVGSTV…ALFIWILVTK (83 aa)) are thiolation and peptide carrier (T) domain. A reductase (R) domain region spans residues 682 to 901 (CIRRVCARIY…PPTKMWVKGV (220 aa)). NADP(+)-binding positions include 685–688 (RVCA), 769–771 (TAL), and Y840.

It belongs to the adenylate-forming reductase family.

Its function is as follows. Adenylate-forming reductase, a natural product biosynthesis enzyme that resembles non-ribosomal peptide synthetases, yet serves to modify one substrate, rather than to condense two or more building blocks. The A-domain preferentially accepts L-serine, L-alanine and L-valine as substrates. The natural product of the enzyme is not yet known. The protein is Adenylate-forming reductase 06235 of Coprinopsis cinerea (strain Okayama-7 / 130 / ATCC MYA-4618 / FGSC 9003) (Inky cap fungus).